A 680-amino-acid polypeptide reads, in one-letter code: Probable inactive DNA (cytosine-5)-methyltransferase DRM3 (680 aa).

Residues 1–24 (MVKVEDDVEGSGINASVGDLRDAA) are disordered. Residues 45–86 (SSSSHVRSQFIGMGFSPMLVDRVLQKHGDRDSDTILEALLSQ) enclose the UBA 1 domain. Residues 91 to 113 (KSGSESGSLGDLFDSDNEENSSH) form a disordered region. In terms of domain architecture, UBA 2 spans 194–235 (SLFGVMDKTLHLLQMGFTEEEVSSVIDKAGPEATVLELADTI). An SAM-dependent MTase DRM-type domain is found at 336-663 (IRRNVRSDVA…QRVKHIMGRL (328 aa)).

The protein belongs to the class I-like SAM-binding methyltransferase superfamily. DRM-methyltransferase family.

It localises to the nucleus. Its function is as follows. Involved in de novo DNA methylation. Involved in RNA-directed DNA methylation (RdDM). The chain is Probable inactive DNA (cytosine-5)-methyltransferase DRM3 from Oryza sativa subsp. japonica (Rice).